The chain runs to 874 residues: Putative disease resistance protein At5g05400 (874 aa).

Residues 22–74 are a coiled coil; sequence LSRNQNRFRNLVDHVAALKKTVRQLEARRDDLLKRIKVQEDRGLNLLDEVQQW. Residues 139–434 enclose the NB-ARC domain; sequence AQKGPIPKVE…GQGIILGSKG (296 aa). 182–189 lines the ATP pocket; that stretch reads GMGGVGKT. LRR repeat units lie at residues 483–505, 506–527, 528–548, 552–574, 575–597, 598–620, and 621–642; these read QKNVLVVEANAQLRDIPKIEDQK, AVRRMSLIYNQIEEACESLHCP, KLETLLLRDNRLRKISREFLS, ILMVLDLSLNPNLIELPSFSPLY, SLRFLNLSCTGITSLPDGLYALR, NLLYLNLEHTYMLKRIYEIHDLP, and NLEVLKLYASGIDITDKLVRQI.

Belongs to the disease resistance NB-LRR family.

Potential disease resistance protein. The protein is Putative disease resistance protein At5g05400 of Arabidopsis thaliana (Mouse-ear cress).